The sequence spans 309 residues: Malate dehydrogenase (309 aa).

NAD(+)-binding positions include 10–15 and D34; that span reads GAGNVG. R83 and R89 together coordinate substrate. NAD(+)-binding positions include N96 and 119–121; that span reads VSN. N121 and R152 together coordinate substrate. H176 serves as the catalytic Proton acceptor.

Belongs to the LDH/MDH superfamily. MDH type 3 family.

The catalysed reaction is (S)-malate + NAD(+) = oxaloacetate + NADH + H(+). In terms of biological role, catalyzes the reversible oxidation of malate to oxaloacetate. The sequence is that of Malate dehydrogenase from Heliobacterium modesticaldum (strain ATCC 51547 / Ice1).